Consider the following 334-residue polypeptide: DNA polymerase beta (334 aa).

The K(+) site is built by lysine 60, leucine 62, and valine 65. Na(+) is bound by residues lysine 60, leucine 62, and valine 65. Catalysis depends on lysine 72, which acts as the Nucleophile; Schiff-base intermediate with DNA; for 5'-dRP lyase activity. Arginine 83 carries the post-translational modification Omega-N-methylarginine; by PRMT6. Positions 101, 103, and 106 each coordinate K(+). Positions 101, 103, and 106 each coordinate Na(+). Arginine 149 is an a 2'-deoxyribonucleoside 5'-triphosphate binding site. Omega-N-methylarginine; by PRMT6 is present on arginine 152. A 2'-deoxyribonucleoside 5'-triphosphate-binding residues include serine 180, arginine 183, glycine 189, and aspartate 190. Positions 183–192 are DNA-binding; the sequence is RGAESSGDMD. Mg(2+)-binding residues include aspartate 190, aspartate 192, and aspartate 255.

It belongs to the DNA polymerase type-X family. In terms of assembly, monomer. Mg(2+) serves as cofactor. Methylation by PRMT6 stimulates the polymerase activity by enhancing DNA binding and processivity. In terms of processing, ubiquitinated: monoubiquitinated by huwe1/arf-bp1. Monoubiquitinated protein is then the target of stub1/chip, which catalyzes polyubiquitination from monoubiquitin, leading to degradation by the proteasome. usp47 mediates the deubiquitination of monoubiquitinated protein, preventing polyubiquitination by STUB1/CHIP and its subsequent degradation.

Its subcellular location is the nucleus. The protein localises to the cytoplasm. The catalysed reaction is DNA(n) + a 2'-deoxyribonucleoside 5'-triphosphate = DNA(n+1) + diphosphate. The enzyme catalyses a 5'-end 2'-deoxyribose-2'-deoxyribonucleotide-DNA = (2E,4S)-4-hydroxypenten-2-al-5-phosphate + a 5'-end 5'-phospho-2'-deoxyribonucleoside-DNA + H(+). It carries out the reaction 2'-deoxyribonucleotide-(2'-deoxyribose 5'-phosphate)-2'-deoxyribonucleotide-DNA = a 3'-end 2'-deoxyribonucleotide-(2,3-dehydro-2,3-deoxyribose 5'-phosphate)-DNA + a 5'-end 5'-phospho-2'-deoxyribonucleoside-DNA + H(+). Functionally, repair polymerase that plays a key role in base-excision repair. During this process, the damaged base is excised by specific DNA glycosylases, the DNA backbone is nicked at the abasic site by an apurinic/apyrimidic (AP) endonuclease, and POLB removes 5'-deoxyribose-phosphate from the preincised AP site acting as a 5'-deoxyribose-phosphate lyase (5'-dRP lyase); through its DNA polymerase activity, it adds one nucleotide to the 3' end of the arising single-nucleotide gap. Conducts 'gap-filling' DNA synthesis in a stepwise distributive fashion rather than in a processive fashion as for other DNA polymerases. It is also able to cleave sugar-phosphate bonds 3' to an intact AP site, acting as an AP lyase. This is DNA polymerase beta (polb) from Xenopus laevis (African clawed frog).